We begin with the raw amino-acid sequence, 357 residues long: Anthranilate phosphoribosyltransferase (357 aa).

5-phospho-alpha-D-ribose 1-diphosphate is bound by residues glycine 94, 97 to 98, threonine 102, 104 to 107, 122 to 130, and glycine 134; these read GD, NLST, and KHGNRAASS. Glycine 94 is an anthranilate binding site. Position 106 (serine 106) interacts with Mg(2+). Asparagine 125 serves as a coordination point for anthranilate. Arginine 180 contributes to the anthranilate binding site. The Mg(2+) site is built by aspartate 238 and glutamate 239.

This sequence belongs to the anthranilate phosphoribosyltransferase family. In terms of assembly, homodimer. Requires Mg(2+) as cofactor.

It carries out the reaction N-(5-phospho-beta-D-ribosyl)anthranilate + diphosphate = 5-phospho-alpha-D-ribose 1-diphosphate + anthranilate. It functions in the pathway amino-acid biosynthesis; L-tryptophan biosynthesis; L-tryptophan from chorismate: step 2/5. Catalyzes the transfer of the phosphoribosyl group of 5-phosphorylribose-1-pyrophosphate (PRPP) to anthranilate to yield N-(5'-phosphoribosyl)-anthranilate (PRA). The chain is Anthranilate phosphoribosyltransferase from Mycobacterium sp. (strain JLS).